The primary structure comprises 89 residues: MALTNADRAAIIAKFARAENDTGSPEVQVALLTAQINDLQGHFKEHKHDHHSRRGLIRMVNQRRKLLDYLNGKDHGRYVSLIGELGLRR.

It belongs to the universal ribosomal protein uS15 family. In terms of assembly, part of the 30S ribosomal subunit. Forms a bridge to the 50S subunit in the 70S ribosome, contacting the 23S rRNA.

In terms of biological role, one of the primary rRNA binding proteins, it binds directly to 16S rRNA where it helps nucleate assembly of the platform of the 30S subunit by binding and bridging several RNA helices of the 16S rRNA. Functionally, forms an intersubunit bridge (bridge B4) with the 23S rRNA of the 50S subunit in the ribosome. This chain is Small ribosomal subunit protein uS15, found in Acinetobacter baylyi (strain ATCC 33305 / BD413 / ADP1).